A 158-amino-acid chain; its full sequence is Transcription elongation factor GreA (158 aa).

The stretch at 8–74 forms a coiled coil; it reads TKGGYNKLKD…TLERVLSTAT (67 aa).

The protein belongs to the GreA/GreB family.

In terms of biological role, necessary for efficient RNA polymerase transcription elongation past template-encoded arresting sites. The arresting sites in DNA have the property of trapping a certain fraction of elongating RNA polymerases that pass through, resulting in locked ternary complexes. Cleavage of the nascent transcript by cleavage factors such as GreA or GreB allows the resumption of elongation from the new 3'terminus. GreA releases sequences of 2 to 3 nucleotides. This chain is Transcription elongation factor GreA, found in Chloroherpeton thalassium (strain ATCC 35110 / GB-78).